The chain runs to 662 residues: Methyl-accepting chemotaxis protein McpB (662 aa).

The Cytoplasmic portion of the chain corresponds to 1–16 (MKTFINWLKKPSISKK). Residues 17–37 (LIVSFIAILIIPILILEFSSY) traverse the membrane as a helical segment. Residues 38–282 (RSASGKLDQE…IKDASKSVLT (245 aa)) lie on the Extracellular side of the membrane. In terms of domain architecture, Cache spans 153–229 (VTDPYVAASD…KAGEKLSGDW (77 aa)). Residues 283–303 (TGMIVLIASIVAGGILILFIV) traverse the membrane as a helical segment. The HAMP domain maps to 304–356 (RSITKPLKRLVQSSKTISRGDLTETIEIHSKDELGELGESFNEMGQSLRSLIS). The Cytoplasmic segment spans residues 304–662 (RSITKPLKRL…RDLTKQFKIE (359 aa)). Glutamine 371 and glutamine 595 each carry glutamate methyl ester (Gln). Residues 375 to 611 (SAGQTSKATE…HVSAAVSGIA (237 aa)) form the Methyl-accepting transducer domain. Residues glutamate 630 and glutamate 637 each carry the glutamate methyl ester (Glu) modification.

It belongs to the methyl-accepting chemotaxis (MCP) protein family. As to quaternary structure, interacts with FloT. Post-translationally, some glutamine residues are deamidated to glutamate by CheD and subsequently methylated. The demethylation is selective. Gln-371 is demethylated only upon asparagine addition whereas Glu-637 is demethylated only upon asparagine removal. Glu-630 appears indiscriminate and is demethylated upon both addition and removal of asparagine.

The protein resides in the cell membrane. It localises to the membrane raft. In terms of biological role, chemotactic-signal transducers respond to changes in the concentration of attractants and repellents in the environment, transduce a signal from the outside to the inside of the cell, and facilitate sensory adaptation through the variation of the level of methylation. All amino acids serve as attractants in B.subtilis, they appear to cause an increase in the turnover methyl groups, leading to methylation of an unidentified acceptor, while repellents have been shown to cause a decrease in methyl group turnover. The methyl groups are added by a methyltransferase and removed by a methylesterase. McpB is required for taxis towards asparagine, aspartate, glutamine, and histidine. This chain is Methyl-accepting chemotaxis protein McpB (mcpB), found in Bacillus subtilis (strain 168).